Reading from the N-terminus, the 230-residue chain is Large ribosomal subunit protein uL1 (230 aa).

It belongs to the universal ribosomal protein uL1 family. As to quaternary structure, part of the 50S ribosomal subunit.

Binds directly to 23S rRNA. The L1 stalk is quite mobile in the ribosome, and is involved in E site tRNA release. Its function is as follows. Protein L1 is also a translational repressor protein, it controls the translation of the L11 operon by binding to its mRNA. The chain is Large ribosomal subunit protein uL1 from Rhodopseudomonas palustris (strain BisB18).